The sequence spans 579 residues: Zinc finger protein 384 (579 aa).

The tract at residues Thr171 to Lys198 is disordered. The span at Glu175–Thr185 shows a compositional bias: gly residues. C2H2-type zinc fingers lie at residues Tyr229–His251, His257–His279, Tyr285–His307, His318–His340, Tyr346–His368, Tyr374–His398, Phe404–His426, and Tyr434–His456. Residues Gln500 to Gln513 show a composition bias toward low complexity. Positions Gln500 to Tyr553 are disordered. Residues Gln514 to Phe523 are compositionally biased toward pro residues.

It belongs to the krueppel C2H2-type zinc-finger protein family. In terms of assembly, interacts with BCAR1. As to expression, expressed in osteocytes, osteoblasts, and chondrocytes in bone.

It is found in the nucleus. In terms of biological role, transcription factor that binds the consensus DNA sequence [GC]AAAAA. Seems to bind and regulate the promoters of MMP1, MMP3, MMP7 and COL1A1. The polypeptide is Zinc finger protein 384 (Znf384) (Rattus norvegicus (Rat)).